A 222-amino-acid polypeptide reads, in one-letter code: Translation initiation factor 6 (222 aa).

This sequence belongs to the eIF-6 family.

Functionally, binds to the 50S ribosomal subunit and prevents its association with the 30S ribosomal subunit to form the 70S initiation complex. In Methanothermobacter thermautotrophicus (strain ATCC 29096 / DSM 1053 / JCM 10044 / NBRC 100330 / Delta H) (Methanobacterium thermoautotrophicum), this protein is Translation initiation factor 6.